We begin with the raw amino-acid sequence, 269 residues long: tRNA pseudouridine synthase A (269 aa).

The active-site Nucleophile is aspartate 55. Position 111 (tyrosine 111) interacts with substrate.

Belongs to the tRNA pseudouridine synthase TruA family.

The enzyme catalyses uridine(38/39/40) in tRNA = pseudouridine(38/39/40) in tRNA. In terms of biological role, formation of pseudouridine at positions 38, 39 and 40 in the anticodon stem and loop of transfer RNAs. This chain is tRNA pseudouridine synthase A, found in Methanosarcina mazei (strain ATCC BAA-159 / DSM 3647 / Goe1 / Go1 / JCM 11833 / OCM 88) (Methanosarcina frisia).